The primary structure comprises 303 residues: Coenzyme PQQ synthesis protein B (303 aa).

Belongs to the PqqB family.

Its pathway is cofactor biosynthesis; pyrroloquinoline quinone biosynthesis. In terms of biological role, may be involved in the transport of PQQ or its precursor to the periplasm. This chain is Coenzyme PQQ synthesis protein B, found in Pseudomonas fluorescens (strain Pf0-1).